A 999-amino-acid polypeptide reads, in one-letter code: MAELCRMDSTLTALDEEMLWDMLESHRCRIVQSICPSRLTPYLRQAKVLGQLDEEEILHSSRFTNSAMRVGHLLDLLKARGKNGAIAFLESLKFHNPDVYTLVTGLQSDIDFSTFSGLMETSKLTECLAGAISSLQEELAQEKAQKEVLLRRCQQLKERLGLAEAHAEGLRQLEVDHSRMKREVSTHFHEVLKLKDEMLNLSLHYSNALREKELAATRCHSLQEELYLVKQELQRASLVSSCERESRERSLKMASNLEPQGEELNRLKEENEKLRSMTFSLVEKDILEQSLDEARESKQELVDRIHSLRERAVAAERQQKQYWEEKEQTLLQFRKTQVDCELYKEKMTMLQGQVAELQKERDQAYTARDRAQMEISQRLVEKDALRRRVFELTEQVCELRTQLRRLQAEAPGGPKQEAGARELCLRGKQRLVRMHAVCPPDDSDCSLLSSTESRLWWDLNSTSSREQMDSFRSSSPMPPSQQSLYKRVAEDFLEDPESLSFPEVLEMRLQGATVDDTDTDLEFEMIDGADLSQTEDSLQGSSRSLNVSESSVPVRRRPARKILSQVTVLAFQGDALLEQIGVIGGNLTGIFIHRVTPGSAADEMALRPGTQIMMVDYKPTKPSLRATLENTTLEQAVGLLRRVNGSCYLSVKINTEGYKNLIQDLDAKVVTSGDSFYIRVNLAMQRGGDGELQTHCNDILHVTDTMFQGRSCWHAHHVNPYTMKDMEPGTIPNYSQAQQQLLALIQDMTQRCTVPRKPPGGPQKLVRIVSVDKAAVSPLTSSFDQSQWDSGKEEGGPSVCFWSESCFTLAPYTLVHPHRPARPRPVLFVPRLVGRILGKKLCLLQGFKQCSAEYLSQEEYATWSQRGDIIQEGESIGDHHWITRHAVESLMNMSTHALLDVRLDSVRVLHRMDMFPIIIHVSVNEKTAKKLRKGLHRLGSSEEQFLEVARQEEGELDRVPCLYSSLAPDSWSDLDSLLSCVRLAIADEQKKVVWTESPC.

In terms of domain architecture, CARD spans D15–Q107. A coiled-coil region spans residues T125–P411. The interval E409 to Q565 is maintains the protein in an inactive state. Residue S541 is modified to Phosphoserine. Positions Q572–T655 constitute a PDZ domain. The Guanylate kinase-like domain maps to S803–A986.

In terms of assembly, interacts (via CARD domain) with BCL10 (via CARD domain). Forms a complex with MALT1 and BCL10; resulting in the formation of a CBM (CARD14-BLC10-MALT1) complex. Interacts with TRAF2, TRAF3 and TRAF6.

Its subcellular location is the cytoplasm. Functionally, acts as a scaffolding protein that can activate the inflammatory transcription factor NF-kappa-B and p38/JNK MAP kinase signaling pathways. Forms a signaling complex with BCL10 and MALT1, and activates MALT1 proteolytic activity and inflammatory gene expression. MALT1 is indispensable for CARD14-induced activation of NF-kappa-B and p38/JNK MAP kinases. May play a role in signaling mediated by TRAF2, TRAF3 and TRAF6 and protects cells against apoptosis. The sequence is that of Caspase recruitment domain-containing protein 14 (Card14) from Mus musculus (Mouse).